The chain runs to 437 residues: Serine hydroxymethyltransferase (437 aa).

(6S)-5,6,7,8-tetrahydrofolate contacts are provided by residues leucine 130 and 134 to 136 (GHL). Lysine 239 carries the N6-(pyridoxal phosphate)lysine modification. 363–365 (TPF) serves as a coordination point for (6S)-5,6,7,8-tetrahydrofolate.

It belongs to the SHMT family. In terms of assembly, homodimer. Requires pyridoxal 5'-phosphate as cofactor.

The protein localises to the cytoplasm. The enzyme catalyses (6R)-5,10-methylene-5,6,7,8-tetrahydrofolate + glycine + H2O = (6S)-5,6,7,8-tetrahydrofolate + L-serine. It functions in the pathway one-carbon metabolism; tetrahydrofolate interconversion. The protein operates within amino-acid biosynthesis; glycine biosynthesis; glycine from L-serine: step 1/1. In terms of biological role, catalyzes the reversible interconversion of serine and glycine with tetrahydrofolate (THF) serving as the one-carbon carrier. This reaction serves as the major source of one-carbon groups required for the biosynthesis of purines, thymidylate, methionine, and other important biomolecules. Also exhibits THF-independent aldolase activity toward beta-hydroxyamino acids, producing glycine and aldehydes, via a retro-aldol mechanism. The protein is Serine hydroxymethyltransferase of Bartonella henselae (strain ATCC 49882 / DSM 28221 / CCUG 30454 / Houston 1) (Rochalimaea henselae).